The sequence spans 109 residues: uncharacterized protein (109 aa).

Residues 78–98 (YTCIMYIGLLCMFVLLYMTVI) form a helical membrane-spanning segment.

It is found in the membrane. This is an uncharacterized protein from Saccharomyces cerevisiae (strain ATCC 204508 / S288c) (Baker's yeast).